Reading from the N-terminus, the 277-residue chain is MDIIRTIEEMRSWRQKAGRVALVPTMGNLHEGHLALVREAKKQAERVVVSIFVNRLQFGQGEDFDSYPRTFEADRDKLAAAGVDALFLPDERELYPRIRQDFNVEPPHIQDELCGAFRPGHFRGVATVVTKLFNIVQPDAACFGKKDFQQLHIIQAMVADLNQPVKVVPVDIGRAADGLALSSRNGYLSAGEREEAPRLFRELSRIRENLIDGENDYASLEQDARATLEQHGWRVDYVEIRQADTLELAHAGEKRLVVLAAARIGKTRLIDNVEIFR.

26–33 (MGNLHEGH) provides a ligand contact to ATP. Histidine 33 serves as the catalytic Proton donor. Glutamine 57 is a (R)-pantoate binding site. Glutamine 57 provides a ligand contact to beta-alanine. 144–147 (GKKD) is a binding site for ATP. Glutamine 150 is a (R)-pantoate binding site. ATP contacts are provided by residues glycine 173 and 181 to 184 (LSSR).

The protein belongs to the pantothenate synthetase family. In terms of assembly, homodimer.

The protein resides in the cytoplasm. The catalysed reaction is (R)-pantoate + beta-alanine + ATP = (R)-pantothenate + AMP + diphosphate + H(+). The protein operates within cofactor biosynthesis; (R)-pantothenate biosynthesis; (R)-pantothenate from (R)-pantoate and beta-alanine: step 1/1. In terms of biological role, catalyzes the condensation of pantoate with beta-alanine in an ATP-dependent reaction via a pantoyl-adenylate intermediate. The protein is Pantothenate synthetase of Laribacter hongkongensis (strain HLHK9).